Here is a 291-residue protein sequence, read N- to C-terminus: MALILDGKSLSKKIREEIKKEVENFTSKGFRPPALAVILVGNDPASEIYVNNKRKACEKVGIKSLFYHLPQDVSEEKLLGLIYELNMNEEVDGILVQLPLPKHIDQTRVILSISPEKDVDGFHPENMGKLVAQIEDGFIPCTPLGIDILLKHYGIDVKGKDVTIVGAGFIVGRPLSLLMLWRNATVSVCHIHTKDVKKFTKEADILISATGVPHLIKEDMIKEGAVVVDVGISRLNGKIVGDVDFERVKEKASAITPVPGGVGPMTVTALLLNTLKSYKRKFAHLISTTNP.

NADP(+) contacts are provided by residues 166–168 (GAG), isoleucine 191, and isoleucine 232.

The protein belongs to the tetrahydrofolate dehydrogenase/cyclohydrolase family. In terms of assembly, homodimer.

It catalyses the reaction (6R)-5,10-methylene-5,6,7,8-tetrahydrofolate + NADP(+) = (6R)-5,10-methenyltetrahydrofolate + NADPH. The enzyme catalyses (6R)-5,10-methenyltetrahydrofolate + H2O = (6R)-10-formyltetrahydrofolate + H(+). It participates in one-carbon metabolism; tetrahydrofolate interconversion. Catalyzes the oxidation of 5,10-methylenetetrahydrofolate to 5,10-methenyltetrahydrofolate and then the hydrolysis of 5,10-methenyltetrahydrofolate to 10-formyltetrahydrofolate. This is Bifunctional protein FolD from Aquifex aeolicus (strain VF5).